A 470-amino-acid polypeptide reads, in one-letter code: MRSLFFLFIVHLLALGSGKAVFKNGVSQRTFREIKEEIANYEDVAKAIINLAVYGKYQNRSYERLGLLVDTVGPRLSGSKNLEKAIQIMYQNLQQDGLENVHLEQVRIPHWERGEESAVMLEPRIHKMAILGLGSSIGTPPGGITAEVLVVASFDELQRRASEARGKIIVYNQPYTGYEKTVQYRVQGAVEAAKVGAVASLIQSVASFSIYSPHTGIQKYQDGVPKIPTACITVEDAEMMSRMASRGNKIVIHLEMGAKTYPDTDSFNTVAEITGSMYPEEVVLVSGHLDSWDVGQGALDDGGGAFISWEALSLVKDLGLRPKRTLRLVLWTAEEQGGIGASQYYELHKANISKYSLVMEADSGTFLPTGLQFTGSDKARAIMKEVMNLLQPLNVTKVFSNGEGTDINFWIQAGVPGASLRDDLYKYFFFHHSHGDTMTVMDPKQMNVAAAVWAVVAYVVADMDEMLPRS.

An N-terminal signal peptide occupies residues 1–18 (MRSLFFLFIVHLLALGSG). A propeptide spanning residues 19–42 (KAVFKNGVSQRTFREIKEEIANYE) is cleaved from the precursor. N-linked (GlcNAc...) asparagine glycosylation occurs at Asn-59. His-288 and Asp-300 together coordinate Zn(2+). Glu-334 (nucleophile) is an active-site residue. Glu-335 contacts Zn(2+). A glycan (N-linked (GlcNAc...) asparagine) is linked at Asn-351. Asp-362 serves as a coordination point for Zn(2+). Residue Asn-394 is glycosylated (N-linked (GlcNAc...) asparagine). His-432 provides a ligand contact to Zn(2+).

The protein belongs to the peptidase M28 family. In terms of assembly, homodimer. The monomeric form is inactive while the homodimer is active. Post-translationally, N-glycosylated. The secreted form is modified by hybrid or complex type oligosaccharide chains.

The protein localises to the endoplasmic reticulum. It localises to the golgi apparatus. It is found in the lysosome. The protein resides in the secreted. Functionally, carboxypeptidase that may play an important role in the hydrolysis of circulating peptides. Catalyzes the hydrolysis of dipeptides with unsubstituted terminals into amino acids. May play a role in the liberation of thyroxine hormone from its thyroglobulin (Tg) precursor. The polypeptide is Carboxypeptidase Q (Cpq) (Mus musculus (Mouse)).